The following is a 423-amino-acid chain: uncharacterized protein (423 aa).

Positions methionine 1–alanine 16 are cleaved as a signal peptide. At glutamine 17–serine 402 the chain is on the extracellular side. 16 disulfide bridges follow: cysteine 24/cysteine 217, cysteine 33/cysteine 43, cysteine 36/cysteine 68, cysteine 46/cysteine 57, cysteine 219/cysteine 238, cysteine 230/cysteine 241, cysteine 243/cysteine 252, cysteine 254/cysteine 288, cysteine 271/cysteine 286, cysteine 280/cysteine 291, cysteine 293/cysteine 303, cysteine 305/cysteine 327, cysteine 310/cysteine 325, cysteine 319/cysteine 330, cysteine 332/cysteine 341, and cysteine 343/cysteine 350. An N-linked (GlcNAc...) asparagine glycan is attached at asparagine 65. The tract at residues cysteine 215–cysteine 350 is cysteine-rich tandem repeats. I-EGF domains are found at residues cysteine 219–glutamate 253, cysteine 254–glutamine 304, and cysteine 305–serine 342. The N-linked (GlcNAc...) asparagine glycan is linked to asparagine 274. An N-linked (GlcNAc...) asparagine glycan is attached at asparagine 307. The tract at residues glycine 354–valine 406 is disordered. Positions methionine 380–glutamate 392 are enriched in acidic residues. The helical transmembrane segment at serine 403–leucine 421 threads the bilayer. The Cytoplasmic portion of the chain corresponds to asparagine 422–phenylalanine 423.

Belongs to the integrin beta chain family.

The protein localises to the membrane. This is an uncharacterized protein from Caenorhabditis elegans.